The following is a 466-amino-acid chain: Zinc finger and SCAN domain-containing protein 26 (466 aa).

Lys-21 is covalently cross-linked (Glycyl lysine isopeptide (Lys-Gly) (interchain with G-Cter in SUMO2)). Positions 42–124 (CKQFRQLRYE…GILEDLQLDR (83 aa)) constitute an SCAN box domain. Composition is skewed to basic and acidic residues over residues 124-135 (RGKAGEQKDSAQ) and 163-173 (KPEERGKETRS). Positions 124 to 182 (RGKAGEQKDSAQRSRPTVLVGEPAPRREAREQPGCALPQKPEERGKETRSENGNLIAGT) are disordered. The C2H2-type 1; degenerate zinc-finger motif lies at 220–242 (SQCLETKERLVQNSGLIEHDRAH). 7 consecutive C2H2-type zinc fingers follow at residues 270–292 (HPCQ…QKIH), 298–320 (YQCK…LRIH), 326–348 (YLCI…QKIH), 354–376 (RECK…QRVH), 382–404 (HHCN…HRIH), 410–432 (FKCN…VRIH), and 438–460 (YKCS…QRHH).

It is found in the nucleus. Its function is as follows. May be involved in transcriptional regulation. This chain is Zinc finger and SCAN domain-containing protein 26 (Zscan26), found in Mus musculus (Mouse).